A 506-amino-acid polypeptide reads, in one-letter code: Plant intracellular Ras-group-related LRR protein 1 (506 aa).

The segment at 24-48 is disordered; sequence TAKSSSSSDVEPPPSKSDPSSSSNH. Residues 143–193 adopt a coiled-coil conformation; that stretch reads KSILKLNELHESYEKLLKEAEERLVRIYESAEKNAAAVAEEEAAEVEVNEE. 10 LRR repeats span residues 203–225, 226–249, 251–272, 273–295, 297–319, 320–342, 344–364, 365–389, 390–412, and 414–436; these read ENPL…AFGK, IQGL…IAGL, NLLE…IGLL, SKLK…ICHC, SLVV…GFEL, VKLE…IGEM, SLRY…SFGL, LTNL…SFGD, LISL…AFGT, and VNLT…VVKQ. The short motif at 437–449 is the GVYW element; sequence GVDAVKMYMGKRW.

This sequence belongs to the SHOC2 family. Widely expressed.

Its function is as follows. Leucine-rich repeat protein that likely mediates protein interactions, possibly in the context of signal transduction. PIRL1 acts redundantly with PIRL9 in the differentiation of microspores into pollen. This Arabidopsis thaliana (Mouse-ear cress) protein is Plant intracellular Ras-group-related LRR protein 1 (PIRL1).